The primary structure comprises 647 residues: Threonine--tRNA ligase (647 aa).

The TGS domain maps to 1 to 61 (MIKITFPDGA…EEDGSIEIVT (61 aa)). The interval 240–538 (DHRKLGKELD…LIETYKGAFP (299 aa)) is catalytic. Residues cysteine 334, histidine 385, and histidine 515 each coordinate Zn(2+).

Belongs to the class-II aminoacyl-tRNA synthetase family. In terms of assembly, homodimer. Requires Zn(2+) as cofactor.

The protein localises to the cytoplasm. The enzyme catalyses tRNA(Thr) + L-threonine + ATP = L-threonyl-tRNA(Thr) + AMP + diphosphate + H(+). In terms of biological role, catalyzes the attachment of threonine to tRNA(Thr) in a two-step reaction: L-threonine is first activated by ATP to form Thr-AMP and then transferred to the acceptor end of tRNA(Thr). Also edits incorrectly charged L-seryl-tRNA(Thr). The sequence is that of Threonine--tRNA ligase from Streptococcus pyogenes serotype M18 (strain MGAS8232).